We begin with the raw amino-acid sequence, 211 residues long: tRNA (guanosine(18)-2'-O)-methyltransferase (211 aa).

Thr-103, Ile-146, and Leu-155 together coordinate S-adenosyl-L-methionine.

This sequence belongs to the class IV-like SAM-binding methyltransferase superfamily. RNA methyltransferase TrmH family. Homodimer.

It catalyses the reaction guanosine(18) in tRNA + S-adenosyl-L-methionine = 2'-O-methylguanosine(18) in tRNA + S-adenosyl-L-homocysteine + H(+). Catalyzes the 2'-O methylation of guanosine at position 18 in tRNA. Type II methylase, which methylates only a subset of tRNA species. The sequence is that of tRNA (guanosine(18)-2'-O)-methyltransferase from Aquifex aeolicus (strain VF5).